The chain runs to 659 residues: Threonine--tRNA ligase (659 aa).

A TGS domain is found at 7-70; the sequence is DSELIKLTLP…QQDGAIEIVT (64 aa). Residues 253–555 are catalytic; that stretch reads DHRKLGSELE…LIENFAGNFP (303 aa). Cys-351, His-402, and His-532 together coordinate Zn(2+).

Belongs to the class-II aminoacyl-tRNA synthetase family. As to quaternary structure, homodimer. It depends on Zn(2+) as a cofactor.

Its subcellular location is the cytoplasm. It catalyses the reaction tRNA(Thr) + L-threonine + ATP = L-threonyl-tRNA(Thr) + AMP + diphosphate + H(+). Functionally, catalyzes the attachment of threonine to tRNA(Thr) in a two-step reaction: L-threonine is first activated by ATP to form Thr-AMP and then transferred to the acceptor end of tRNA(Thr). Also edits incorrectly charged L-seryl-tRNA(Thr). In Chloroherpeton thalassium (strain ATCC 35110 / GB-78), this protein is Threonine--tRNA ligase.